Here is a 99-residue protein sequence, read N- to C-terminus: Integration host factor subunit alpha (99 aa).

Residues 49 to 71 (FGNFDLRDKNQRPGRNPKTGEDI) form a disordered region.

This sequence belongs to the bacterial histone-like protein family. As to quaternary structure, heterodimer of an alpha and a beta chain.

Its function is as follows. This protein is one of the two subunits of integration host factor, a specific DNA-binding protein that functions in genetic recombination as well as in transcriptional and translational control. This Shewanella frigidimarina (strain NCIMB 400) protein is Integration host factor subunit alpha.